The primary structure comprises 83 residues: Large ribosomal subunit protein uL23 (83 aa).

The protein belongs to the universal ribosomal protein uL23 family. As to quaternary structure, part of the 50S ribosomal subunit. Contacts protein L29.

Binds to 23S rRNA. One of the proteins that surrounds the polypeptide exit tunnel on the outside of the ribosome. The protein is Large ribosomal subunit protein uL23 of Archaeoglobus fulgidus (strain ATCC 49558 / DSM 4304 / JCM 9628 / NBRC 100126 / VC-16).